The sequence spans 667 residues: Bifunctional polymyxin resistance protein ArnA (667 aa).

Residues 1 to 304 form a formyltransferase ArnAFT region; it reads MKAIVFAYHD…EMGIVTDVRL (304 aa). The active-site Proton donor; for formyltransferase activity is the histidine 104. (6R)-10-formyltetrahydrofolate contacts are provided by residues arginine 114 and 136–140; that span reads VKKAD. The segment at 314-667 is dehydrogenase ArnADH; it reads RRTRVLILGV…TAAPKDELNA (354 aa). NAD(+) contacts are provided by residues aspartate 347 and 368–369; that span reads DI. Residues alanine 393, tyrosine 398, and 432 to 433 each bind UDP-alpha-D-glucuronate; that span reads TS. Residue glutamate 434 is the Proton acceptor; for decarboxylase activity of the active site. Residues arginine 460, asparagine 492, 526 to 535, and tyrosine 613 contribute to the UDP-alpha-D-glucuronate site; that span reads KLVDGGAQKR. Arginine 619 acts as the Proton donor; for decarboxylase activity in catalysis.

In the N-terminal section; belongs to the Fmt family. UDP-L-Ara4N formyltransferase subfamily. It in the C-terminal section; belongs to the NAD(P)-dependent epimerase/dehydratase family. UDP-glucuronic acid decarboxylase subfamily. In terms of assembly, homohexamer, formed by a dimer of trimers.

The enzyme catalyses UDP-alpha-D-glucuronate + NAD(+) = UDP-beta-L-threo-pentopyranos-4-ulose + CO2 + NADH. It catalyses the reaction UDP-4-amino-4-deoxy-beta-L-arabinose + (6R)-10-formyltetrahydrofolate = UDP-4-deoxy-4-formamido-beta-L-arabinose + (6S)-5,6,7,8-tetrahydrofolate + H(+). It participates in nucleotide-sugar biosynthesis; UDP-4-deoxy-4-formamido-beta-L-arabinose biosynthesis; UDP-4-deoxy-4-formamido-beta-L-arabinose from UDP-alpha-D-glucuronate: step 1/3. It functions in the pathway nucleotide-sugar biosynthesis; UDP-4-deoxy-4-formamido-beta-L-arabinose biosynthesis; UDP-4-deoxy-4-formamido-beta-L-arabinose from UDP-alpha-D-glucuronate: step 3/3. The protein operates within bacterial outer membrane biogenesis; lipopolysaccharide biosynthesis. Functionally, bifunctional enzyme that catalyzes the oxidative decarboxylation of UDP-glucuronic acid (UDP-GlcUA) to UDP-4-keto-arabinose (UDP-Ara4O) and the addition of a formyl group to UDP-4-amino-4-deoxy-L-arabinose (UDP-L-Ara4N) to form UDP-L-4-formamido-arabinose (UDP-L-Ara4FN). The modified arabinose is attached to lipid A and is required for resistance to polymyxin and cationic antimicrobial peptides. This Yersinia pseudotuberculosis serotype IB (strain PB1/+) protein is Bifunctional polymyxin resistance protein ArnA.